An 88-amino-acid polypeptide reads, in one-letter code: UPF0223 protein OB1419 (88 aa).

The protein belongs to the UPF0223 family.

In Oceanobacillus iheyensis (strain DSM 14371 / CIP 107618 / JCM 11309 / KCTC 3954 / HTE831), this protein is UPF0223 protein OB1419.